The primary structure comprises 692 residues: Elongation factor G (692 aa).

A tr-type G domain is found at 8–282 (ENTRNIGIMA…AVIDYLPSPL (275 aa)). GTP is bound by residues 17–24 (AHIDAGKT), 81–85 (DTPGH), and 135–138 (NKMD).

It belongs to the TRAFAC class translation factor GTPase superfamily. Classic translation factor GTPase family. EF-G/EF-2 subfamily.

Its subcellular location is the cytoplasm. Functionally, catalyzes the GTP-dependent ribosomal translocation step during translation elongation. During this step, the ribosome changes from the pre-translocational (PRE) to the post-translocational (POST) state as the newly formed A-site-bound peptidyl-tRNA and P-site-bound deacylated tRNA move to the P and E sites, respectively. Catalyzes the coordinated movement of the two tRNA molecules, the mRNA and conformational changes in the ribosome. This Bacillus cereus (strain G9842) protein is Elongation factor G.